Reading from the N-terminus, the 510-residue chain is Probable cytosol aminopeptidase (510 aa).

K268 and D273 together coordinate Mn(2+). K280 is an active-site residue. The Mn(2+) site is built by D291, D350, and E352. Residue R354 is part of the active site.

It belongs to the peptidase M17 family. The cofactor is Mn(2+).

It localises to the cytoplasm. The enzyme catalyses Release of an N-terminal amino acid, Xaa-|-Yaa-, in which Xaa is preferably Leu, but may be other amino acids including Pro although not Arg or Lys, and Yaa may be Pro. Amino acid amides and methyl esters are also readily hydrolyzed, but rates on arylamides are exceedingly low.. It carries out the reaction Release of an N-terminal amino acid, preferentially leucine, but not glutamic or aspartic acids.. Presumably involved in the processing and regular turnover of intracellular proteins. Catalyzes the removal of unsubstituted N-terminal amino acids from various peptides. In Micrococcus luteus (strain ATCC 4698 / DSM 20030 / JCM 1464 / CCM 169 / CCUG 5858 / IAM 1056 / NBRC 3333 / NCIMB 9278 / NCTC 2665 / VKM Ac-2230) (Micrococcus lysodeikticus), this protein is Probable cytosol aminopeptidase.